A 129-amino-acid chain; its full sequence is 3-aminoacrylate deaminase RutC (129 aa).

Belongs to the RutC family.

The catalysed reaction is (Z)-3-aminoacrylate + H2O + H(+) = 3-oxopropanoate + NH4(+). Involved in pyrimidine catabolism. Catalyzes the deamination of 3-aminoacrylate to malonic semialdehyde, a reaction that can also occur spontaneously. RutC may facilitate the reaction and modulate the metabolic fitness, rather than catalyzing essential functions. This is 3-aminoacrylate deaminase RutC from Yersinia enterocolitica serotype O:8 / biotype 1B (strain NCTC 13174 / 8081).